The sequence spans 338 residues: Solute-binding protein Rfer_1840 (338 aa).

The N-terminal stretch at 1 to 25 (MQRRQLLQSMGGLAASTMPFSLAFA) is a signal peptide. Malonate contacts are provided by residues arginine 47, tyrosine 100, arginine 175, serine 197, 214–218 (TSSTS), and glutamate 244.

This sequence belongs to the bacterial solute-binding protein 7 family. In terms of assembly, the complex is comprised of an extracytoplasmic solute-binding protein and a heteromeric permease formed by two transmembrane proteins.

Its subcellular location is the periplasm. Functionally, solute-binding protein that binds malonate (in vitro). Probably part of a tripartite ATP-independent periplasmic (TRAP) transport system that mediates solute transport into the cytoplasm. This is Solute-binding protein Rfer_1840 from Albidiferax ferrireducens (strain ATCC BAA-621 / DSM 15236 / T118) (Rhodoferax ferrireducens).